The chain runs to 564 residues: MFS-type efflux transporter ffsH (564 aa).

The span at 1 to 18 shows a compositional bias: basic and acidic residues; that stretch reads MSEAEKKASQDAQHKEPM. Residues 1-37 are disordered; sequence MSEAEKKASQDAQHKEPMADSETQLDSDSAPSSQAEK. The span at 21-35 shows a compositional bias: polar residues; the sequence is SETQLDSDSAPSSQA. 4 helical membrane passes run 43–63, 98–118, 131–151, and 157–177; these read YPLSFWLAFGALCLTGLISAM, YVMILATAIFLLGSGICGGAN, GIGAGGINMLVDLIICDLVPM, and FIGLLFLFVSIGTTSGPIIGG. A glycan (N-linked (GlcNAc...) asparagine) is linked at Asn-182. 9 helical membrane-spanning segments follow: residues 187 to 207, 226 to 246, 254 to 274, 300 to 320, 334 to 354, 362 to 382, 389 to 409, 427 to 447, and 502 to 522; these read WVFYINLPMGGAALVLLVLFL, VVGNAILVGATFSILYALTYG, AANIVAPFVLGFVGLGIFIAW, FFISFMTMILAFWVVYFYPVY, VHLLPFEVSFPIFAAVGGGLV, PIHMVATSIVTIAIGASSVLT, AWAVLQIFIGMGLGSLISTTL, TWAYMRSLGTIWGVSVPAAIF, and VWLVSIAFGAVTVLSTLFEKE. The interval 540 to 564 is disordered; sequence GDAKGDVERGEGQNDSREGGQNENV. A glycan (N-linked (GlcNAc...) asparagine) is linked at Asn-553.

This sequence belongs to the major facilitator superfamily.

The protein resides in the cell membrane. In terms of biological role, MFS-type efflux transporter; part of the gene cluster that mediates the biosynthesis of the cytotoxic leucine-containing cytochalasans, including aspochalasin C, aspochalasin E, TMC-169, flavichalasine F, aspergillin PZ, aspochalasin M and flavichalasine G. FfsH might be involved in the excretion of cytochalasans. The protein is MFS-type efflux transporter ffsH of Aspergillus flavipes.